The primary structure comprises 600 residues: Elongation factor 4 (600 aa).

Residues 5–187 (KYIRNFSIIA…AIVNKLPPPK (183 aa)) form the tr-type G domain. GTP is bound by residues 17–22 (DHGKST) and 134–137 (NKID).

Belongs to the TRAFAC class translation factor GTPase superfamily. Classic translation factor GTPase family. LepA subfamily.

The protein localises to the cell inner membrane. It catalyses the reaction GTP + H2O = GDP + phosphate + H(+). Functionally, required for accurate and efficient protein synthesis under certain stress conditions. May act as a fidelity factor of the translation reaction, by catalyzing a one-codon backward translocation of tRNAs on improperly translocated ribosomes. Back-translocation proceeds from a post-translocation (POST) complex to a pre-translocation (PRE) complex, thus giving elongation factor G a second chance to translocate the tRNAs correctly. Binds to ribosomes in a GTP-dependent manner. The polypeptide is Elongation factor 4 (Rickettsia canadensis (strain McKiel)).